The primary structure comprises 160 residues: 3-dehydroquinate dehydratase (160 aa).

The active-site Proton acceptor is Tyr-22. The substrate site is built by Asn-73, His-79, and Asp-86. The Proton donor role is filled by His-99. Substrate contacts are provided by residues 100–101 and Arg-110; that span reads IS.

This sequence belongs to the type-II 3-dehydroquinase family. As to quaternary structure, homododecamer.

The enzyme catalyses 3-dehydroquinate = 3-dehydroshikimate + H2O. It functions in the pathway metabolic intermediate biosynthesis; chorismate biosynthesis; chorismate from D-erythrose 4-phosphate and phosphoenolpyruvate: step 3/7. Its function is as follows. Catalyzes a trans-dehydration via an enolate intermediate. In Campylobacter lari (strain RM2100 / D67 / ATCC BAA-1060), this protein is 3-dehydroquinate dehydratase.